Reading from the N-terminus, the 289-residue chain is Stress response regulator protein 1 (289 aa).

The segment at 77 to 136 is disordered; it reads LDCTNSEMDEEDDFEDDEDDENLGLINPLHHKSSHGQISDYSPLTPFTEPPSASLSKPSF. Acidic residues predominate over residues 83–98; sequence EMDEEDDFEDDEDDEN. A compositionally biased stretch (polar residues) spans 127–136; the sequence is PSASLSKPSF. The 119-residue stretch at 163–281 folds into the Response regulatory domain; that stretch reads NFLIVDDNII…YDFVMDRIDE (119 aa). Position 214 is a 4-aspartylphosphate (Asp214).

Required for stress adaptation, morphogenesis and virulence. In Scheffersomyces stipitis (strain ATCC 58785 / CBS 6054 / NBRC 10063 / NRRL Y-11545) (Yeast), this protein is Stress response regulator protein 1 (SRR1).